Reading from the N-terminus, the 188-residue chain is Elongation factor P (188 aa).

The protein belongs to the elongation factor P family.

It localises to the cytoplasm. It functions in the pathway protein biosynthesis; polypeptide chain elongation. In terms of biological role, involved in peptide bond synthesis. Stimulates efficient translation and peptide-bond synthesis on native or reconstituted 70S ribosomes in vitro. Probably functions indirectly by altering the affinity of the ribosome for aminoacyl-tRNA, thus increasing their reactivity as acceptors for peptidyl transferase. The polypeptide is Elongation factor P (Phenylobacterium zucineum (strain HLK1)).